The chain runs to 536 residues: MADFSVFLGFLKQIPRCLSIFFTYLLFLQLWEVNSDKVWVLGPEESILARVGEAVEFPCRLSSYQDAEHMEIRWFRAQVSNVVYLYQEPQGRSSLQMAQFRNRTLFEAYDIAEGSVNLHILKVLPSDEGRYGCRFLSDNFSGEATWELEVAGSGSDPHISLQGFSGEGIQLQCSSSGWYPKPKVQWRGHQGQCLSPESEAITQNAQGLFSLETSVIVRGGAHSNVSCIIQNPLLPQKKEFVIQIADVFLPRMSPWKKAFVGTLVVLPLSLIVLTMLALRYFYKLRSFQEKQVKQGEEVREKLQTELDWRRSEGQAEWRAAQQYAADVTLDPATAHPSLEVSNNGKTVSSRLGVPSIAAGDPQRFSEQTCVLSRERFSSGRHYWEVHVGRRSRWFLGACLESVERSGPARLSPAAGYWVMGLWNRCEYFVLDPHRVALALRVPPRRIGVLLDYEAGKLSFFNVSDGSHIFSFTDTFSGALRAYLRPRAHDGSEHPDPMTICSLPVRGPQVLEENDNDNWLQPYEPLDPAWAVNEAVS.

The N-terminal stretch at 1-35 is a signal peptide; the sequence is MADFSVFLGFLKQIPRCLSIFFTYLLFLQLWEVNS. Ig-like V-type domains lie at 36–149 and 152–241; these read DKVW…WELE and GSGS…KEFV. Over 36–257 the chain is Extracellular; that stretch reads DKVWVLGPEE…FLPRMSPWKK (222 aa). Cys59 and Cys133 form a disulfide bridge. Residues Asn102, Asn139, and Asn224 are each glycosylated (N-linked (GlcNAc...) asparagine). Residues Cys173 and Cys227 are joined by a disulfide bond. Residues 258 to 278 form a helical membrane-spanning segment; sequence AFVGTLVVLPLSLIVLTMLAL. At 279-536 the chain is on the cytoplasmic side; sequence RYFYKLRSFQ…PAWAVNEAVS (258 aa). The B30.2/SPRY domain occupies 307–506; sequence DWRRSEGQAE…MTICSLPVRG (200 aa).

This sequence belongs to the immunoglobulin superfamily. BTN/MOG family.

It localises to the membrane. The protein is Butyrophilin-like protein 9 (Btnl9) of Mus musculus (Mouse).